The sequence spans 250 residues: Flagellar L-ring protein (250 aa).

An N-terminal signal peptide occupies residues 1-32 (MTRINTNTQKNNNTKFSKLILGVMVSSIVLSG). Cysteine 33 is lipidated: N-palmitoyl cysteine. Cysteine 33 carries S-diacylglycerol cysteine lipidation.

Belongs to the FlgH family. In terms of assembly, the basal body constitutes a major portion of the flagellar organelle and consists of four rings (L,P,S, and M) mounted on a central rod.

It is found in the cell outer membrane. It localises to the bacterial flagellum basal body. Functionally, assembles around the rod to form the L-ring and probably protects the motor/basal body from shearing forces during rotation. The polypeptide is Flagellar L-ring protein (Hydrogenovibrio crunogenus (strain DSM 25203 / XCL-2) (Thiomicrospira crunogena)).